A 177-amino-acid chain; its full sequence is Dual-action ribosomal maturation protein DarP (177 aa).

This sequence belongs to the DarP family.

The protein resides in the cytoplasm. Its function is as follows. Member of a network of 50S ribosomal subunit biogenesis factors which assembles along the 30S-50S interface, preventing incorrect 23S rRNA structures from forming. Promotes peptidyl transferase center (PTC) maturation. This is Dual-action ribosomal maturation protein DarP from Histophilus somni (strain 129Pt) (Haemophilus somnus).